Here is a 153-residue protein sequence, read N- to C-terminus: Peptide deformylase (153 aa).

Residues Cys-87 and His-129 each coordinate Fe cation. Glu-130 is a catalytic residue. His-133 contacts Fe cation.

This sequence belongs to the polypeptide deformylase family. It depends on Fe(2+) as a cofactor.

The catalysed reaction is N-terminal N-formyl-L-methionyl-[peptide] + H2O = N-terminal L-methionyl-[peptide] + formate. In terms of biological role, removes the formyl group from the N-terminal Met of newly synthesized proteins. Requires at least a dipeptide for an efficient rate of reaction. N-terminal L-methionine is a prerequisite for activity but the enzyme has broad specificity at other positions. This is Peptide deformylase from Dictyoglomus turgidum (strain DSM 6724 / Z-1310).